The following is a 158-amino-acid chain: Sec-independent protein translocase protein TatB (158 aa).

Residues 2–22 (FDGIGFMELLLIGVLGLVVLG) form a helical membrane-spanning segment. A disordered region spans residues 86-158 (LKQAAQSVNR…DTSSNPKANG (73 aa)). Polar residues-rich tracts occupy residues 88–107 (QAAQSVNRPYQVQDSSSQGT), 113–136 (QIHSPAQVSQTNPTTPLETSQHLT), and 143–158 (EPSQGVDTSSNPKANG).

The protein belongs to the TatB family. As to quaternary structure, the Tat system comprises two distinct complexes: a TatABC complex, containing multiple copies of TatA, TatB and TatC subunits, and a separate TatA complex, containing only TatA subunits. Substrates initially bind to the TatABC complex, which probably triggers association of the separate TatA complex to form the active translocon.

The protein resides in the cell inner membrane. In terms of biological role, part of the twin-arginine translocation (Tat) system that transports large folded proteins containing a characteristic twin-arginine motif in their signal peptide across membranes. Together with TatC, TatB is part of a receptor directly interacting with Tat signal peptides. TatB may form an oligomeric binding site that transiently accommodates folded Tat precursor proteins before their translocation. This chain is Sec-independent protein translocase protein TatB, found in Shewanella putrefaciens (strain CN-32 / ATCC BAA-453).